A 156-amino-acid chain; its full sequence is Small ribosomal subunit protein uS7 (156 aa).

It belongs to the universal ribosomal protein uS7 family. As to quaternary structure, part of the 30S ribosomal subunit. Contacts proteins S9 and S11.

In terms of biological role, one of the primary rRNA binding proteins, it binds directly to 16S rRNA where it nucleates assembly of the head domain of the 30S subunit. Is located at the subunit interface close to the decoding center, probably blocks exit of the E-site tRNA. In Rhodococcus erythropolis (strain PR4 / NBRC 100887), this protein is Small ribosomal subunit protein uS7.